The primary structure comprises 88 residues: Small ribosomal subunit protein bS20 (88 aa).

The tract at residues 1-23 (MANTSSAKKATRKIARRAAINKN) is disordered.

This sequence belongs to the bacterial ribosomal protein bS20 family.

Functionally, binds directly to 16S ribosomal RNA. The sequence is that of Small ribosomal subunit protein bS20 from Mesorhizobium japonicum (strain LMG 29417 / CECT 9101 / MAFF 303099) (Mesorhizobium loti (strain MAFF 303099)).